Reading from the N-terminus, the 510-residue chain is 2,3-bisphosphoglycerate-independent phosphoglycerate mutase (510 aa).

The Mn(2+) site is built by Asp11 and Ser61. The active-site Phosphoserine intermediate is the Ser61. Residues His124, 154 to 155, Arg185, Arg191, 260 to 263, and Lys333 each bind substrate; these read RD and RPDR. Positions 398, 402, 439, 440, and 457 each coordinate Mn(2+).

It belongs to the BPG-independent phosphoglycerate mutase family. As to quaternary structure, monomer. Mn(2+) serves as cofactor.

It catalyses the reaction (2R)-2-phosphoglycerate = (2R)-3-phosphoglycerate. It functions in the pathway carbohydrate degradation; glycolysis; pyruvate from D-glyceraldehyde 3-phosphate: step 3/5. Functionally, catalyzes the interconversion of 2-phosphoglycerate and 3-phosphoglycerate. This chain is 2,3-bisphosphoglycerate-independent phosphoglycerate mutase, found in Mycoplasma mobile (strain ATCC 43663 / 163K / NCTC 11711) (Mesomycoplasma mobile).